Consider the following 307-residue polypeptide: Protoheme IX farnesyltransferase (307 aa).

The next 8 membrane-spanning stretches (helical) occupy residues 24–44 (ISLLKPRVMSLVIFTALVGLV), 52–72 (PVIAFTAILCIAVGAGAAGAL), 115–135 (VVLGLLVNVLAGALLAFTIFF), 152–172 (IVIGGLSGALPPMVAWAAASG), 179–199 (VILVAIIFFWTPPHFWALSLY), 224–244 (QILLYTLFLVPLALSPVMLGE), 245–265 (AGLAYGVVAGVTGLGMLLLAV), and 284–304 (FGFSILYLFLLFATLLAEALV).

Belongs to the UbiA prenyltransferase family. Protoheme IX farnesyltransferase subfamily.

It is found in the cell inner membrane. It carries out the reaction heme b + (2E,6E)-farnesyl diphosphate + H2O = Fe(II)-heme o + diphosphate. The protein operates within porphyrin-containing compound metabolism; heme O biosynthesis; heme O from protoheme: step 1/1. Its function is as follows. Converts heme B (protoheme IX) to heme O by substitution of the vinyl group on carbon 2 of heme B porphyrin ring with a hydroxyethyl farnesyl side group. The chain is Protoheme IX farnesyltransferase from Azorhizobium caulinodans (strain ATCC 43989 / DSM 5975 / JCM 20966 / LMG 6465 / NBRC 14845 / NCIMB 13405 / ORS 571).